Here is a 663-residue protein sequence, read N- to C-terminus: Beta-galactosidase YesZ (663 aa).

Position 106 (Arg-106) interacts with substrate. Cys-110 contributes to the Zn(2+) binding site. Asn-144 contributes to the substrate binding site. The active-site Proton donor is Glu-145. Zn(2+) is bound by residues Cys-153, Cys-155, and Cys-158. Glu-296 serves as the catalytic Nucleophile. 345–348 (EISH) is a substrate binding site.

The protein belongs to the glycosyl hydrolase 42 family. In terms of assembly, homotrimer.

It catalyses the reaction Hydrolysis of terminal non-reducing beta-D-galactose residues in beta-D-galactosides.. Functionally, may play a role in the degradation of rhamnogalacturonan derived from plant cell walls. In Bacillus subtilis (strain 168), this protein is Beta-galactosidase YesZ (yesZ).